The primary structure comprises 109 residues: Nucleoid-associated protein Ping_2276 (109 aa).

It belongs to the YbaB/EbfC family. In terms of assembly, homodimer.

The protein localises to the cytoplasm. The protein resides in the nucleoid. Binds to DNA and alters its conformation. May be involved in regulation of gene expression, nucleoid organization and DNA protection. This chain is Nucleoid-associated protein Ping_2276, found in Psychromonas ingrahamii (strain DSM 17664 / CCUG 51855 / 37).